The following is a 504-amino-acid chain: Glucose-6-phosphate isomerase (504 aa).

The active-site Proton donor is E333. Catalysis depends on residues H364 and K473.

The protein belongs to the GPI family.

Its subcellular location is the cytoplasm. The catalysed reaction is alpha-D-glucose 6-phosphate = beta-D-fructose 6-phosphate. The protein operates within carbohydrate biosynthesis; gluconeogenesis. It functions in the pathway carbohydrate degradation; glycolysis; D-glyceraldehyde 3-phosphate and glycerone phosphate from D-glucose: step 2/4. Its function is as follows. Catalyzes the reversible isomerization of glucose-6-phosphate to fructose-6-phosphate. This Stenotrophomonas maltophilia (strain R551-3) protein is Glucose-6-phosphate isomerase.